A 315-amino-acid chain; its full sequence is Rhomboid-related protein 4 (315 aa).

Residues 1 to 21 (MQRRTRGINTGLLLLLSQVFQ) lie on the Cytoplasmic side of the membrane. A helical transmembrane segment spans residues 22–42 (IGINNIPPVTLATLAVNVWFF). Topologically, residues 43 to 103 (LNPWKPLYHS…KLERRLGSRW (61 aa)) are lumenal. A helical transmembrane segment spans residues 104–124 (FAYVIATFSLLTGVVYLLLQF). Residues 125 to 137 (TVAELLNQPDFKR) are Cytoplasmic-facing. Residues 138–154 (NCAVGFSGVLFALKVLS) traverse the membrane as a helical segment. The active-site Nucleophile is the S144. Residues 155-180 (NHYCPGGFVNILGFPVPNRFACWAEL) are Lumenal-facing. The helical transmembrane segment at 181–201 (VAIHFCTPGTSFAGHLAGILV) threads the bilayer. H195 is an active-site residue. At 202-315 (GLMYTQGPLK…RQRLHRFDGQ (114 aa)) the chain is on the cytoplasmic side. A ubiquitin-binding domain (UBD) region spans residues 269 to 284 (SEEEQLERALRASIWD). Positions 301 to 315 (PEEMRRQRLHRFDGQ) are VCP/p97-interacting motif (VIM).

The protein belongs to the peptidase S54 family. As to quaternary structure, interacts with BIK and STEAP3. Interacts (via C-terminal domain) with VCP/P97. Interacts with ubiquitin and ubiquitinated proteins. In terms of tissue distribution, expressed in testis (at protein level). Expressed in intestine, lung, brain, kidney, epididymis, stomach, muscle, spleen, liver, heart and testis.

The protein resides in the endoplasmic reticulum membrane. It is found in the mitochondrion membrane. It catalyses the reaction Cleaves type-1 transmembrane domains using a catalytic dyad composed of serine and histidine that are contributed by different transmembrane domains.. With respect to regulation, inhibited by aprotinin. In terms of biological role, intramembrane-cleaving serine protease that cleaves single transmembrane or multi-pass membrane proteins in the hydrophobic plane of the membrane, luminal loops and juxtamembrane regions. Involved in regulated intramembrane proteolysis and the subsequent release of functional polypeptides from their membrane anchors. Functional component of endoplasmic reticulum-associated degradation (ERAD) for misfolded membrane proteins. Required for the degradation process of some specific misfolded endoplasmic reticulum (ER) luminal proteins. Participates in the transfer of misfolded proteins from the ER to the cytosol, where they are destroyed by the proteasome in a ubiquitin-dependent manner. Functions in BIK, MPZ, PKD1, PTCRA, RHO, STEAP3 and TRAC processing. Involved in the regulation of exosomal secretion; inhibits the TSAP6-mediated secretion pathway. Involved in the regulation of apoptosis; modulates BIK-mediated apoptotic activity. Also plays a role in the regulation of spermatogenesis; inhibits apoptotic activity in spermatogonia. This chain is Rhomboid-related protein 4 (Rhbdd1), found in Mus musculus (Mouse).